We begin with the raw amino-acid sequence, 175 residues long: uncharacterized protein (175 aa).

Disordered stretches follow at residues 68–112 (NKNN…DQPY) and 153–175 (PEKAKRDDSDDEDSMFPIKKLTT). The span at 94 to 105 (DEQPMMPYQQPP) shows a compositional bias: low complexity.

This sequence belongs to the asfivirus H171R family.

It localises to the virion. This is an uncharacterized protein from African swine fever virus (isolate Tick/Malawi/Lil 20-1/1983) (ASFV).